Consider the following 336-residue polypeptide: Anthranilate phosphoribosyltransferase (336 aa).

5-phospho-alpha-D-ribose 1-diphosphate-binding positions include Gly83, 86 to 87 (GD), Thr91, 93 to 96 (NIST), 111 to 119 (KHGNRSVSS), and Ser123. Gly83 lines the anthranilate pocket. Mg(2+) is bound at residue Ser95. Residue Asn114 coordinates anthranilate. An anthranilate-binding site is contributed by Arg169. 2 residues coordinate Mg(2+): Asp227 and Glu228.

Belongs to the anthranilate phosphoribosyltransferase family. As to quaternary structure, homodimer. It depends on Mg(2+) as a cofactor.

It carries out the reaction N-(5-phospho-beta-D-ribosyl)anthranilate + diphosphate = 5-phospho-alpha-D-ribose 1-diphosphate + anthranilate. The protein operates within amino-acid biosynthesis; L-tryptophan biosynthesis; L-tryptophan from chorismate: step 2/5. Catalyzes the transfer of the phosphoribosyl group of 5-phosphorylribose-1-pyrophosphate (PRPP) to anthranilate to yield N-(5'-phosphoribosyl)-anthranilate (PRA). In Vibrio campbellii (strain ATCC BAA-1116), this protein is Anthranilate phosphoribosyltransferase.